The primary structure comprises 639 residues: Serine/threonine-protein phosphatase 2B catalytic subunit A1 (639 aa).

Asp120, His122, and Asp148 together coordinate Fe cation. Zn(2+)-binding residues include Asp148 and Asn180. His181 acts as the Proton donor in catalysis. Zn(2+)-binding residues include His229 and His311. The segment covering 494-503 has biased composition (basic and acidic residues); it reads KSDIENERLP. The tract at residues 494-602 is disordered; the sequence is KSDIENERLP…PSTRRRSLEN (109 aa). Composition is skewed to low complexity over residues 515-527 and 546-572; these read ASPS…PATP and TPIS…GGPP.

This sequence belongs to the PPP phosphatase family. PP-2B subfamily. Composed of two components (A and B), the A component is the catalytic subunit and the B component confers calcium sensitivity. It depends on Fe(3+) as a cofactor. Zn(2+) serves as cofactor.

It carries out the reaction O-phospho-L-seryl-[protein] + H2O = L-seryl-[protein] + phosphate. It catalyses the reaction O-phospho-L-threonyl-[protein] + H2O = L-threonyl-[protein] + phosphate. Its function is as follows. Calcium-dependent, calmodulin-stimulated protein phosphatase. This subunit may have a role in the calmodulin activation of calcineurin. The sequence is that of Serine/threonine-protein phosphatase 2B catalytic subunit A1 (CNA1) from Cryptococcus neoformans var. grubii serotype A (strain H99 / ATCC 208821 / CBS 10515 / FGSC 9487) (Filobasidiella neoformans var. grubii).